We begin with the raw amino-acid sequence, 91 residues long: Non-specific lipid-transfer protein 1 (91 aa).

Intrachain disulfides connect Cys-3-Cys-50, Cys-13-Cys-27, Cys-28-Cys-73, and Cys-48-Cys-87. Arg-44 and Tyr-79 together coordinate a 1,2-diacyl-sn-glycero-3-phosphocholine.

As to quaternary structure, monomer.

In terms of biological role, plant non-specific lipid-transfer proteins transfer phospholipids as well as galactolipids across membranes. May play a role in wax or cutin deposition in the cell walls of expanding epidermal cells and certain secretory tissues. Has antifungal activity against F.solani, F.oxysporum, P.aphanidermatum and S.rolfsii. Has antibacterial activity against the Gram-positive bacterium S.aureus but not against the Gram-negative bacterium S.typhimurium. The polypeptide is Non-specific lipid-transfer protein 1 (Vigna radiata var. radiata (Mung bean)).